The primary structure comprises 801 residues: Probable inorganic carbon transporter subunit DabA (801 aa).

Zn(2+) is bound by residues cysteine 332, aspartate 334, histidine 500, and cysteine 515.

It belongs to the inorganic carbon transporter (TC 9.A.2) DabA family. As to quaternary structure, forms a complex with DabB. It depends on Zn(2+) as a cofactor.

It is found in the cell inner membrane. Its function is as follows. Part of an energy-coupled inorganic carbon pump. The chain is Probable inorganic carbon transporter subunit DabA from Marinobacter nauticus (strain ATCC 700491 / DSM 11845 / VT8) (Marinobacter aquaeolei).